The sequence spans 490 residues: Aspartyl/glutamyl-tRNA(Asn/Gln) amidotransferase subunit B (490 aa).

It belongs to the GatB/GatE family. GatB subfamily. As to quaternary structure, heterotrimer of A, B and C subunits.

The catalysed reaction is L-glutamyl-tRNA(Gln) + L-glutamine + ATP + H2O = L-glutaminyl-tRNA(Gln) + L-glutamate + ADP + phosphate + H(+). The enzyme catalyses L-aspartyl-tRNA(Asn) + L-glutamine + ATP + H2O = L-asparaginyl-tRNA(Asn) + L-glutamate + ADP + phosphate + 2 H(+). Functionally, allows the formation of correctly charged Asn-tRNA(Asn) or Gln-tRNA(Gln) through the transamidation of misacylated Asp-tRNA(Asn) or Glu-tRNA(Gln) in organisms which lack either or both of asparaginyl-tRNA or glutaminyl-tRNA synthetases. The reaction takes place in the presence of glutamine and ATP through an activated phospho-Asp-tRNA(Asn) or phospho-Glu-tRNA(Gln). This Symbiobacterium thermophilum (strain DSM 24528 / JCM 14929 / IAM 14863 / T) protein is Aspartyl/glutamyl-tRNA(Asn/Gln) amidotransferase subunit B.